A 197-amino-acid chain; its full sequence is Adenylate kinase (197 aa).

ATP is bound at residue 7-15 (ALPGSGKTT).

The protein belongs to the archaeal adenylate kinase family.

The protein resides in the cytoplasm. It catalyses the reaction AMP + ATP = 2 ADP. This chain is Adenylate kinase (adkA), found in Pyrobaculum aerophilum (strain ATCC 51768 / DSM 7523 / JCM 9630 / CIP 104966 / NBRC 100827 / IM2).